We begin with the raw amino-acid sequence, 577 residues long: Zona pellucida sperm-binding protein 3 receptor (577 aa).

The signal sequence occupies residues 1–32 (MTAWSLHELWKTSHSTLFQVTLATVLMAPVLG). Sushi domains follow at residues 33-92 (DCGP…FCAR), 93-154 (KRCK…ECVI), 155-219 (ATCE…ACEK), 220-279 (IVCH…TCEP), 280-346 (NGCI…GCER), and 347-412 (VCCP…SCEA). Cystine bridges form between Cys34–Cys78, Cys64–Cys90, Cys95–Cys136, Cys122–Cys152, Cys157–Cys200, Cys186–Cys217, Cys222–Cys264, Cys250–Cys277, Cys282–Cys332, Cys316–Cys344, Cys349–Cys397, and Cys382–Cys410. N-linked (GlcNAc...) asparagine glycosylation is found at Asn72 and Asn81. 3 N-linked (GlcNAc...) asparagine glycosylation sites follow: Asn144, Asn195, and Asn204. Asn335 carries an N-linked (GlcNAc...) asparagine glycan. Asn426, Asn431, Asn434, Asn443, Asn462, Asn475, and Asn497 each carry an N-linked (GlcNAc...) asparagine glycan. One can recognise a Sushi 7 domain in the interval 451-509 (AVCPKPEIINGNLSVEKEIYAEMENITIQCDSGYDLVGSSNIICLENRTWYPDIPFCIM). Intrachain disulfides connect Cys453-Cys494 and Cys480-Cys507.

As to quaternary structure, homomultimer; disulfide-linked. Post-translationally, glycosylated. In terms of tissue distribution, testis specific.

Its subcellular location is the cytoplasmic vesicle. It localises to the secretory vesicle. The protein resides in the acrosome lumen. Binds to ZP3 glycoprotein in egg zona pellucida. Probably involved in interactions between sperm acrosome and egg zona pellucida during and immediately following the acrosome reaction. This chain is Zona pellucida sperm-binding protein 3 receptor (Zp3r), found in Rattus norvegicus (Rat).